The sequence spans 79 residues: uncharacterized protein (79 aa).

An N-terminal signal peptide occupies residues 1–33 (MRLIIRAIVLLALVWIGLLMSGYGILVGSKVNA).

This is an uncharacterized protein from Salmonella typhi.